We begin with the raw amino-acid sequence, 156 residues long: Ribosomal RNA large subunit methyltransferase H (156 aa).

S-adenosyl-L-methionine is bound by residues Leu-73, Gly-104, and 123–128 (LSALTL).

This sequence belongs to the RNA methyltransferase RlmH family. Homodimer.

It is found in the cytoplasm. The enzyme catalyses pseudouridine(1915) in 23S rRNA + S-adenosyl-L-methionine = N(3)-methylpseudouridine(1915) in 23S rRNA + S-adenosyl-L-homocysteine + H(+). Functionally, specifically methylates the pseudouridine at position 1915 (m3Psi1915) in 23S rRNA. In Colwellia psychrerythraea (strain 34H / ATCC BAA-681) (Vibrio psychroerythus), this protein is Ribosomal RNA large subunit methyltransferase H.